The sequence spans 441 residues: MSYTPGHHAGSRSSSGNRSGILKKTSWVDQSERSHQTYNRGRKPQPKFTVSTQPQGNPIPHYSWFSGITQFQKGRDFKFPDGQGVPIAYGIPPSEAKGYWYKHNRRSFKTADGQQKQLLPRWYFYYLGTGPYASSSYGDAHEGIFWVASHQADTSIPSDVSARDPTIQEAIPTRFSPGTILPQGYYVEGSGRSASNSRPGSRSQSRGPNNRSLSRSNSNFRHSDSIVKPDMADEIASLVLAKLGKDSKPQQVTKQNAKEIRHKILMKPRQKRTPNKFCNVQQCFGKRGPLQNFGNSEMLKLGTNDPQFPILAELAPTPGAFFFGSKLELFKRDSDADSPSKDTFELRYSGSIRFDSTLPGFETIMKVLKENLDAYVNSNQNTVSGSLSPKPQRKRGVKQSPESFDSLNLSADTQHISNDFTPEDHSLLATLDDPYVEDSVA.

The disordered stretch occupies residues 1 to 56 (MSYTPGHHAGSRSSSGNRSGILKKTSWVDQSERSHQTYNRGRKPQPKFTVSTQPQG). Residues 11-20 (SRSSSGNRSG) are compositionally biased toward low complexity. The tract at residues 53–193 (QPQGNPIPHY…GYYVEGSGRS (141 aa)) is RNA-binding. In terms of domain architecture, CoV N NTD spans 60–189 (PHYSWFSGIT…ILPQGYYVEG (130 aa)). R105 and R121 together coordinate RNA. S158 is subject to Phosphoserine; by host. An RNA-binding site is contributed by R163. At T173 the chain carries Phosphothreonine; by host. The disordered stretch occupies residues 186-226 (YVEGSGRSASNSRPGSRSQSRGPNNRSLSRSNSNFRHSDSI). Residues 189-220 (GSGRSASNSRPGSRSQSRGPNNRSLSRSNSNF) show a composition bias toward low complexity. S190 is subject to Phosphoserine; by host. Residues 257-379 (AKEIRHKILM…ENLDAYVNSN (123 aa)) form the CoV N CTD domain. The dimerization stretch occupies residues 264–382 (ILMKPRQKRT…DAYVNSNQNT (119 aa)). A compositionally biased stretch (polar residues) spans 380–389 (QNTVSGSLSP). Residues 380–408 (QNTVSGSLSPKPQRKRGVKQSPESFDSLN) are disordered. Phosphoserine; by host occurs at positions 388 and 417. Position 421 is a phosphothreonine; by host (T421).

It belongs to the betacoronavirus nucleocapsid protein family. As to quaternary structure, homooligomer. Both monomeric and oligomeric forms interact with RNA. Interacts with protein M. Interacts with NSP3; this interaction serves to tether the genome to the newly translated replicase-transcriptase complex at a very early stage of infection. In terms of processing, ADP-ribosylated. The ADP-ribosylation is retained in the virion during infection. Post-translationally, phosphorylated on serine and threonine residues.

It is found in the virion. Its subcellular location is the host endoplasmic reticulum-Golgi intermediate compartment. The protein resides in the host Golgi apparatus. In terms of biological role, packages the positive strand viral genome RNA into a helical ribonucleocapsid (RNP) and plays a fundamental role during virion assembly through its interactions with the viral genome and membrane protein M. Plays an important role in enhancing the efficiency of subgenomic viral RNA transcription as well as viral replication. The protein is Nucleoprotein of Homo sapiens (Human).